The chain runs to 247 residues: Probable chemoreceptor glutamine deamidase CheD (247 aa).

The disordered stretch occupies residues 204–247; that stretch reads KRPAAPQPARPRIELFGGRGTTPGAGSQAAGSPYAANLSRKQEA.

Belongs to the CheD family.

It catalyses the reaction L-glutaminyl-[protein] + H2O = L-glutamyl-[protein] + NH4(+). In terms of biological role, probably deamidates glutamine residues to glutamate on methyl-accepting chemotaxis receptors (MCPs), playing an important role in chemotaxis. This is Probable chemoreceptor glutamine deamidase CheD from Burkholderia orbicola (strain MC0-3).